Reading from the N-terminus, the 445-residue chain is Tubulin alpha-3 chain (445 aa).

Residues glutamine 11, glutamate 72, serine 141, glycine 145, threonine 146, threonine 180, asparagine 207, and asparagine 229 each contribute to the GTP site. Position 72 (glutamate 72) interacts with Mg(2+). Residue glutamate 255 is part of the active site.

It belongs to the tubulin family. In terms of assembly, dimer of alpha and beta chains. A typical microtubule is a hollow water-filled tube with an outer diameter of 25 nm and an inner diameter of 15 nM. Alpha-beta heterodimers associate head-to-tail to form protofilaments running lengthwise along the microtubule wall with the beta-tubulin subunit facing the microtubule plus end conferring a structural polarity. Microtubules usually have 13 protofilaments but different protofilament numbers can be found in some organisms and specialized cells. Interacts with NUM1. The cofactor is Mg(2+).

The protein resides in the cytoplasm. It localises to the cytoskeleton. The enzyme catalyses GTP + H2O = GDP + phosphate + H(+). Functionally, tubulin is the major constituent of microtubules, a cylinder consisting of laterally associated linear protofilaments composed of alpha- and beta-tubulin heterodimers. Microtubules grow by the addition of GTP-tubulin dimers to the microtubule end, where a stabilizing cap forms. Below the cap, tubulin dimers are in GDP-bound state, owing to GTPase activity of alpha-tubulin. This Saccharomyces cerevisiae (strain ATCC 204508 / S288c) (Baker's yeast) protein is Tubulin alpha-3 chain (TUB3).